The primary structure comprises 681 residues: MASGAPDGKWKVVKKGKKSGEKGGGRKALSESNVTPGGTAPIKMANTVYEMGFEQILKKQNKEQVPPNNIPAEQPQKKQQQQQNPGRKKPQSGDTGSRQRKFHTLEEGLKALDLAELQRELEKSQNMFPESPSIWVKDLAGYLNYKLQTVKNDVLIQQSHDYPYCLVNKELKGIVRSLLAKAPHVLDVMVDHCIFSMFQELDKPTGESLHGYRICLQAVLLDKPKTVTNNLPKYLELLRSQVNRPMKCLAVMWAVGQAGFTDLSEGLKVWLGLMFPVLGVKTLTPYAILYLDRLLLAHSNLTKGFGMIGPKDFFPLLDFAFMPNNSLTSSQQENLRNLYPRLKVLAFGATPESTLHTYFPSFLSRVTPSCPAEMRKELINSLTDCLNKDPLSFSVWRQLYTKHLSQSSFLLQHLVETWDSNSKAMRKSVRETVHSFKVTNGEFSGKGSSLKDLEACDAACQALLHKMKGSGFPWRRLIVIAFVFLFGFVFYDVRTHNSFQASTSHKVLQQSGLLSVSQQAWSKVSNYSLQGQSWLERNVPQYYSQAVEVLGPVLEQVWAKTQEGAAYACEKGSVLITYTKDNLPRLIEWLHSHTPDSVCQFIEYLRELLLHLHRTYLLPAVTYLEAAVQNAWQQYVASCNGKVTWDCVRGQVSNISHSSWTYLQNTTMTVTNWALSIISHH.

2 disordered regions span residues 1 to 41 (MASG…GTAP) and 58 to 99 (KKQN…GSRQ). N-linked (GlcNAc...) asparagine glycosylation is found at Asn-300 and Asn-324. The next 2 helical transmembrane spans lie at 471 to 491 (GFPW…FVFY) and 608 to 628 (LLLH…EAAV).

The protein belongs to the TMEM214 family. As to quaternary structure, constitutively interacts with CASP4; required for the localization of procaspase 4 to the ER.

It is found in the endoplasmic reticulum membrane. Critical mediator, in cooperation with CASP4, of endoplasmic reticulum-stress induced apoptosis. Required or the activation of CASP4 following endoplasmic reticulum stress. The polypeptide is Transmembrane protein 214-A (tmem214-a) (Xenopus laevis (African clawed frog)).